A 417-amino-acid polypeptide reads, in one-letter code: 4-hydroxy-3-methylbut-2-en-1-yl diphosphate synthase (flavodoxin) (417 aa).

[4Fe-4S] cluster contacts are provided by C303, C306, C349, and E356.

It belongs to the IspG family. Requires [4Fe-4S] cluster as cofactor.

It catalyses the reaction (2E)-4-hydroxy-3-methylbut-2-enyl diphosphate + oxidized [flavodoxin] + H2O + 2 H(+) = 2-C-methyl-D-erythritol 2,4-cyclic diphosphate + reduced [flavodoxin]. Its pathway is isoprenoid biosynthesis; isopentenyl diphosphate biosynthesis via DXP pathway; isopentenyl diphosphate from 1-deoxy-D-xylulose 5-phosphate: step 5/6. In terms of biological role, converts 2C-methyl-D-erythritol 2,4-cyclodiphosphate (ME-2,4cPP) into 1-hydroxy-2-methyl-2-(E)-butenyl 4-diphosphate. The sequence is that of 4-hydroxy-3-methylbut-2-en-1-yl diphosphate synthase (flavodoxin) from Mesorhizobium japonicum (strain LMG 29417 / CECT 9101 / MAFF 303099) (Mesorhizobium loti (strain MAFF 303099)).